A 476-amino-acid polypeptide reads, in one-letter code: Immune evasion protein OPG047 (476 aa).

One can recognise a BTB domain in the interval 10 to 90 (CKNILALSMT…SYTGKVYIDS (81 aa)). The 94-residue stretch at 125–218 (CVECYMMGIE…SNYLSPRGIN (94 aa)) folds into the BACK domain. Kelch repeat units follow at residues 269 to 315 (VVYL…PANN), 316 to 359 (KLYV…SINN), 361 to 404 (IYVM…VFGR), 406 to 443 (LFLV…IVDN), and 444 to 476 (KLLL…WDGK).

This sequence belongs to the orthopoxvirus OPG047 family.

Might have a role in the suppression of host immune response. The sequence is that of Immune evasion protein OPG047 (OPG047) from Vaccinia virus (strain Ankara) (VACV).